A 230-amino-acid polypeptide reads, in one-letter code: MTTLTARPEAITFDPQQTALIVVDMQNAYATPGGYLDLAGFDVSTTRPVIANIQTAVTAARAAGMLIIWFQNGWDAQYVEAGGPGSPNFHKSNALKTMRKQPQLQGKLLAKGSWDYQLVDELVPQPGDIVLPKPRYSSFFNTPLDSILRSRGIRHLVFTGIATNVCVESTLRDGFFLEYFGVVLEDATHQAGPEFAQKAALFNIETFFGWVSDVETFCDALSPTSFARIA.

The active-site Proton acceptor is the D24. K133 is a catalytic residue. C166 functions as the Nucleophile in the catalytic mechanism.

The protein belongs to the isochorismatase family. RutB subfamily.

It carries out the reaction (Z)-3-ureidoacrylate + H2O + H(+) = (Z)-3-aminoacrylate + NH4(+) + CO2. The catalysed reaction is (Z)-3-ureidoacrylate + H2O = (Z)-3-aminoacrylate + carbamate + H(+). The enzyme catalyses (Z)-2-methylureidoacrylate + H2O + H(+) = (Z)-2-methylaminoacrylate + NH4(+) + CO2. Its function is as follows. Hydrolyzes ureidoacrylate to form aminoacrylate and carbamate. The carbamate hydrolyzes spontaneously, thereby releasing one of the nitrogen atoms of the pyrimidine ring as ammonia and one of its carbon atoms as CO2. The polypeptide is Ureidoacrylate amidohydrolase RutB (Escherichia coli O7:K1 (strain IAI39 / ExPEC)).